Reading from the N-terminus, the 283-residue chain is Putative sugar uptake protein BA_0200/GBAA_0200/BAS0200 (283 aa).

Helical transmembrane passes span 4-21, 26-48, 52-71, 84-106, 110-132, 151-173, 178-195, 208-230, 234-253, and 260-279; these read LLALLPAIAWGNILLVSV, GAYSQTVGMTIGALFFATIMYVF, ALTMTILIVGFISGLFWALG, VSTTVTISTGMQLVATSIFGVIA, WTTTTTIILGTIAILLIVVGVVF, LLTLIVSTFGYLVYVIIIRWYNI, AILPQAVGMFVGAVVLTS, ALSGLLWGTGNLFLLLSLPRVGV, FPLSQTGIVISTFGAIVFLG, and QLIFIALGSVLIIGGAVLLG.

The protein belongs to the GRP transporter (TC 2.A.7.5) family.

The protein resides in the cell membrane. The protein is Putative sugar uptake protein BA_0200/GBAA_0200/BAS0200 of Bacillus anthracis.